The chain runs to 635 residues: Multiple inositol polyphosphate phosphatase 1 (635 aa).

Residues 1–23 (MMVKIKNIIILFCIFGLLSNVSS) form the signal peptide. The Extracellular segment spans residues 24–565 (LSSSSSSSQS…GNDSHSKKSS (542 aa)). The tract at residues 66-102 (KNGDSNSQGDGSSGNSNSNSNSNSNSNSNSDSSNEPP) is disordered. The segment covering 67-99 (NGDSNSQGDGSSGNSNSNSNSNSNSNSNSDSSN) has biased composition (low complexity). Residue histidine 116 is part of the active site. Residues 380–421 (SSSSSSSSSSNNGDNSGSNGSSGSGSSTSTSSNDNGSTNNND) show a composition bias toward low complexity. The disordered stretch occupies residues 380-425 (SSSSSSSSSSNNGDNSGSNGSSGSGSSTSTSSNDNGSTNNNDNKVE). The helical transmembrane segment at 566–586 (YFLAIFIPITFLVGGTIGGIF) threads the bilayer. Over 587 to 635 (TYFSYEKIMQVKNRKKLTQYGNDEFISSPKSKSFSFKPTKFDSRSPLIQ) the chain is Cytoplasmic. The segment covering 614-624 (SPKSKSFSFKP) has biased composition (low complexity). The interval 614–635 (SPKSKSFSFKPTKFDSRSPLIQ) is disordered.

It belongs to the histidine acid phosphatase family. MINPP1 subfamily.

It localises to the membrane. It catalyses the reaction 1D-myo-inositol hexakisphosphate + H2O = 1D-myo-inositol 1,2,4,5,6-pentakisphosphate + phosphate. It carries out the reaction 1D-myo-inositol 1,2,4,5,6-pentakisphosphate + H2O = 1D-myo-inositol 1,2,5,6-tetrakisphosphate + phosphate. The catalysed reaction is 1D-myo-inositol 1,2,5,6-tetrakisphosphate + H2O = 1D-myo-inositol 1,2,6-trisphosphate + phosphate. The enzyme catalyses 1D-myo-inositol 1,2,6-trisphosphate + H2O = 1D-myo-inositol 1,2-bisphosphate + phosphate. It catalyses the reaction 1D-myo-inositol 1,2-bisphosphate + H2O = 1D-myo-inositol 2-phosphate + phosphate. It carries out the reaction (2R)-2,3-bisphosphoglycerate + H2O = (2R)-2-phosphoglycerate + phosphate. Functionally, probable multiple inositol polyphosphate phosphatase that hydrolyzes 1D-myo-inositol 1,3,4,5,6-pentakisphosphate (InsP5[2OH]) and 1D-myo-inositol hexakisphosphate (InsP6) to a range of less phosphorylated inositol phosphates. This regulates the availability of these various small molecule second messengers and metal chelators which control many aspects of cell physiology. May have a dual substrate specificity, and function as a 2,3-bisphosphoglycerate 3-phosphatase hydrolyzing 2,3-bisphosphoglycerate to 2-phosphoglycerate. 2,3-bisphosphoglycerate (BPG) is formed as part of the Rapoport-Luebering glycolytic bypass. This is Multiple inositol polyphosphate phosphatase 1 (mipp1) from Dictyostelium discoideum (Social amoeba).